A 528-amino-acid polypeptide reads, in one-letter code: MAVAQADPGSDPAGGARFFCTAGRGLEPFLMREVRARLEATQVEYISGKVFFTTCSDLPSMKKLKSAERLFVLIKKQLPIAVSSLHKGKILNEMQRFVNDDPGSWLEAISLWKKLLEHDPKREKVSQRDANPLKRKAGENETIIAKKLKVEEKQEVAKDHGESQEDKLLQGSPEQGEAVTRTELQDHRLNSTTEKAADAQDQEDLTFRVSCRCTGNVRKVITGQEAGRVIGLALMRQFGWKADLRNPNIEIFMHLSDAYSVVGIPLLRMPLASRTYIQTAGLRSTIAWAMASIAEIKAGALVLDPMCGLGTILVEAAEEWPDVFYMGADMSDAQLLGACDNLKAAGLTDRIELLKSSVTDLPLPSQSTDVIISDIPFGKKFKLGKDIKSILQEMERVLRVGGAMVLLLSEDHHRHLTDCGGSSIPLTSKGHIAEPEMKTLSNPDRTGAPDTASPSQRASSVQCLGRMRPCGSLVPVESFKVSLGKTDAFICKYKKAQASGLSSAECHEPGAHTEMAAMQESPSLQDSL.

The span at 154–168 shows a compositional bias: basic and acidic residues; the sequence is QEVAKDHGESQEDKL. 2 disordered regions span residues 154-200 and 437-460; these read QEVA…ADAQ and MKTL…RASS. One can recognise a THUMP domain in the interval 162-266; sequence ESQEDKLLQG…DAYSVVGIPL (105 aa).

This sequence belongs to the methyltransferase superfamily. Part of the heterodimeric THUMPD2-TRM112 methyltransferase complex; this complex forms an active tRNA methyltransferase, where TRMT112 acts as an activator of the catalytic subunit THUMPD2.

The protein resides in the nucleus. It carries out the reaction guanosine in U6 snRNA + S-adenosyl-L-methionine = N(2)-methylguanosine in U6 snRNA + S-adenosyl-L-homocysteine + H(+). Its function is as follows. Catalytic subunit of the THUMPD2-TRM112 methyltransferase complex, that specifically mediates the S-adenosyl-L-methionine-dependent N(2)-methylation of guanosine nucleotides, most probably at position 72 (m2G72), in the U6snRNA of the major spliceosome. This modification in the U6 snRNA affects the constitutive splicing efficiency of introns that have suboptimal splice sites and can impact final mRNA levels. The polypeptide is U6 snRNA (guanine-N(2))-methyltransferase THUMPD2 (Mus musculus (Mouse)).